The primary structure comprises 419 residues: Inward rectifier potassium channel 16 (419 aa).

Residues Met1–Asp67 lie on the Cytoplasmic side of the membrane. The helical transmembrane segment at Thr68–Leu94 threads the bilayer. Topologically, residues Ile95–Ser117 are extracellular. Positions Phe118–Tyr134 form an intramembrane region, helical; Pore-forming. Residues Thr131–Tyr136 carry the Selectivity filter motif. The Extracellular segment spans residues Gly135–Cys143. A helical transmembrane segment spans residues Ser144–Lys171. The Cytoplasmic portion of the chain corresponds to Met172–Met419. Phosphoserine occurs at positions 358, 374, and 376.

Belongs to the inward rectifier-type potassium channel (TC 1.A.2.1) family. KCNJ16 subfamily. It forms heteromeric channels with Kir4.1/KCNJ10; this interaction is required for KCNJ16 localization to the basolateral membrane in kidney cells. As a heteromer with KCNJ10, may interact with MAGI1; this interaction may facilitate KCNJ10/KCNJ16 potassium channel expression at the basolateral membrane in kidney cells. May form heteromers with Kir2.1/KCNJ2. Can form heteromeric channels with Kir4.2/KCNJ15. As to expression, abundantly expressed in the proximal and distal segments of the nephron.

The protein resides in the membrane. Its subcellular location is the basolateral cell membrane. It catalyses the reaction K(+)(in) = K(+)(out). Its activity is regulated as follows. Channel activity is strongly regulated by variations of cytosolic pH; channels are activated by alkaline and inhibited by acidic pH values. Activated by phosphatidylinositol 4,5 biphosphate (PtdIns(4,5)P2). Inward rectifier potassium channels are characterized by a greater tendency to allow potassium to flow into the cell rather than out of it. Their voltage dependence is regulated by the concentration of extracellular potassium; as external potassium is raised, the voltage range of the channel opening shifts to more positive voltages. The inward rectification is mainly due to the blockage of outward current by internal magnesium. KCNJ16 may be involved in the regulation of fluid and pH balance. In the kidney, together with KCNJ10, mediates basolateral K(+) recycling in distal tubules; this process is critical for Na(+) reabsorption at the tubules. In Mus musculus (Mouse), this protein is Inward rectifier potassium channel 16 (Kcnj16).